The chain runs to 378 residues: Biotin synthase (378 aa).

Residues 68–292 (NEVQISTLLS…IAVTRICCPS (225 aa)) form the Radical SAM core domain. Positions 83, 87, and 90 each coordinate [4Fe-4S] cluster. Positions 129, 160, 220, and 296 each coordinate [2Fe-2S] cluster.

It belongs to the radical SAM superfamily. Biotin synthase family. In terms of assembly, homodimer. Requires [4Fe-4S] cluster as cofactor. [2Fe-2S] cluster serves as cofactor.

It catalyses the reaction (4R,5S)-dethiobiotin + (sulfur carrier)-SH + 2 reduced [2Fe-2S]-[ferredoxin] + 2 S-adenosyl-L-methionine = (sulfur carrier)-H + biotin + 2 5'-deoxyadenosine + 2 L-methionine + 2 oxidized [2Fe-2S]-[ferredoxin]. The protein operates within cofactor biosynthesis; biotin biosynthesis; biotin from 7,8-diaminononanoate: step 2/2. In terms of biological role, catalyzes the conversion of dethiobiotin (DTB) to biotin by the insertion of a sulfur atom into dethiobiotin via a radical-based mechanism. This Psychrobacter arcticus (strain DSM 17307 / VKM B-2377 / 273-4) protein is Biotin synthase.